We begin with the raw amino-acid sequence, 205 residues long: MSIMSYNGGAVMAMKGKNCVAIAADRRFGIQAQMVTTDFQKIFPMGDRLYIGLAGLATDVQTVAQRLKFRLNLYELKEGRQIKPYTLMSMVANLLYEKRFGPYYTEPVIAGLDPKTFKPFICSLDLIGCPMVTDDFVVSGTCSEQMYGMCESLWEPNMDPEHLFETISQAMLNAVDRDAVSGMGVIVHVIEKDKITTRTLKARMD.

Residue S2 is modified to N-acetylserine. K77 is subject to N6-acetyllysine.

The protein belongs to the peptidase T1B family. In terms of assembly, the 26S proteasome consists of a 20S proteasome core and two 19S regulatory subunits. The 20S proteasome core is a barrel-shaped complex made of 28 subunits that are arranged in four stacked rings. The two outer rings are each formed by seven alpha subunits, and the two inner rings are formed by seven beta subunits. The proteolytic activity is exerted by three beta-subunits PSMB5, PSMB6 and PSMB7. In terms of tissue distribution, detected in liver (at protein level).

Its subcellular location is the cytoplasm. The protein localises to the nucleus. Non-catalytic component of the 20S core proteasome complex involved in the proteolytic degradation of most intracellular proteins. This complex plays numerous essential roles within the cell by associating with different regulatory particles. Associated with two 19S regulatory particles, forms the 26S proteasome and thus participates in the ATP-dependent degradation of ubiquitinated proteins. The 26S proteasome plays a key role in the maintenance of protein homeostasis by removing misfolded or damaged proteins that could impair cellular functions, and by removing proteins whose functions are no longer required. Associated with the PA200 or PA28, the 20S proteasome mediates ubiquitin-independent protein degradation. This type of proteolysis is required in several pathways including spermatogenesis (20S-PA200 complex) or generation of a subset of MHC class I-presented antigenic peptides (20S-PA28 complex). This chain is Proteasome subunit beta type-3 (Psmb3), found in Mus musculus (Mouse).